The sequence spans 101 residues: Protein Tat (101 aa).

The interval methionine 1–asparagine 24 is interaction with human CREBBP. The transactivation stretch occupies residues methionine 1 to glycine 48. Zn(2+) contacts are provided by cysteine 22, cysteine 25, and cysteine 27. The interval cysteine 22 to cysteine 37 is cysteine-rich. Lysine 28 carries the N6-acetyllysine; by host PCAF modification. 4 residues coordinate Zn(2+): cysteine 30, histidine 33, cysteine 34, and cysteine 37. Residues phenylalanine 38–glycine 48 are core. The span at glycine 48–arginine 57 shows a compositional bias: basic residues. The tract at residues glycine 48–aspartate 101 is disordered. A Nuclear localization signal, RNA-binding (TAR), and protein transduction motif is present at residues arginine 49–arginine 57. The interval arginine 49–glutamate 86 is interaction with the host capping enzyme RNGTT. 2 positions are modified to N6-acetyllysine; by host EP300 and GCN5L2: lysine 50 and lysine 51. Residues arginine 52 and arginine 53 each carry the asymmetric dimethylarginine; by host PRMT6 modification. Residues glutamine 60–glycine 79 are compositionally biased toward polar residues. Lysine 71 is covalently cross-linked (Glycyl lysine isopeptide (Lys-Gly) (interchain with G-Cter in ubiquitin)). Residues arginine 78–aspartate 80 carry the Cell attachment site motif. A compositionally biased stretch (basic and acidic residues) spans glutamate 86–aspartate 101.

This sequence belongs to the lentiviruses Tat family. As to quaternary structure, interacts with host CCNT1. Associates with the P-TEFb complex composed at least of Tat, P-TEFb (CDK9 and CCNT1), TAR RNA, RNA Pol II. Recruits the HATs CREBBP, TAF1/TFIID, EP300, PCAF and GCN5L2. Interacts with host KAT5/Tip60; this interaction targets the latter to degradation. Interacts with the host deacetylase SIRT1. Interacts with host capping enzyme RNGTT; this interaction stimulates RNGTT. Binds to host KDR, and to the host integrins ITGAV/ITGB3 and ITGA5/ITGB1. Interacts with host KPNB1/importin beta-1 without previous binding to KPNA1/importin alpha-1. Interacts with EIF2AK2. Interacts with host nucleosome assembly protein NAP1L1; this interaction may be required for the transport of Tat within the nucleus, since the two proteins interact at the nuclear rim. Interacts with host C1QBP/SF2P32; this interaction involves lysine-acetylated Tat. Interacts with the host chemokine receptors CCR2, CCR3 and CXCR4. Interacts with host DPP4/CD26; this interaction may trigger an anti-proliferative effect. Interacts with host LDLR. Interacts with the host extracellular matrix metalloproteinase MMP1. Interacts with host PRMT6; this interaction mediates Tat's methylation. Interacts with, and is ubiquitinated by MDM2/Hdm2. Interacts with host PSMC3 and HTATIP2. Interacts with STAB1; this interaction may overcome SATB1-mediated repression of IL2 and IL2RA (interleukin) in T cells by binding to the same domain than HDAC1. Interacts (when acetylated) with human CDK13, thereby increasing HIV-1 mRNA splicing and promoting the production of the doubly spliced HIV-1 protein Nef. Interacts with host TBP; this interaction modulates the activity of transcriptional pre-initiation complex. Interacts with host RELA. Interacts with host PLSCR1; this interaction negatively regulates Tat transactivation activity by altering its subcellular distribution. Asymmetrical arginine methylation by host PRMT6 seems to diminish the transactivation capacity of Tat and affects the interaction with host CCNT1. Post-translationally, acetylation by EP300, CREBBP, GCN5L2/GCN5 and PCAF regulates the transactivation activity of Tat. EP300-mediated acetylation of Lys-50 promotes dissociation of Tat from the TAR RNA through the competitive binding to PCAF's bromodomain. In addition, the non-acetylated Tat's N-terminus can also interact with PCAF. PCAF-mediated acetylation of Lys-28 enhances Tat's binding to CCNT1. Lys-50 is deacetylated by SIRT1. In terms of processing, polyubiquitination by host MDM2 does not target Tat to degradation, but activates its transactivation function and fosters interaction with CCNT1 and TAR RNA. Phosphorylated by EIF2AK2 on serine and threonine residues adjacent to the basic region important for TAR RNA binding and function. Phosphorylation of Tat by EIF2AK2 is dependent on the prior activation of EIF2AK2 by dsRNA.

The protein localises to the host nucleus. It localises to the host nucleolus. It is found in the host cytoplasm. The protein resides in the secreted. Functionally, transcriptional activator that increases RNA Pol II processivity, thereby increasing the level of full-length viral transcripts. Recognizes a hairpin structure at the 5'-LTR of the nascent viral mRNAs referred to as the transactivation responsive RNA element (TAR) and recruits the cyclin T1-CDK9 complex (P-TEFb complex) that will in turn hyperphosphorylate the RNA polymerase II to allow efficient elongation. The CDK9 component of P-TEFb and other Tat-activated kinases hyperphosphorylate the C-terminus of RNA Pol II that becomes stabilized and much more processive. Other factors such as HTATSF1/Tat-SF1, SUPT5H/SPT5, and HTATIP2 are also important for Tat's function. Besides its effect on RNA Pol II processivity, Tat induces chromatin remodeling of proviral genes by recruiting the histone acetyltransferases (HATs) CREBBP, EP300 and PCAF to the chromatin. This also contributes to the increase in proviral transcription rate, especially when the provirus integrates in transcriptionally silent region of the host genome. To ensure maximal activation of the LTR, Tat mediates nuclear translocation of NF-kappa-B by interacting with host RELA. Through its interaction with host TBP, Tat may also modulate transcription initiation. Tat can reactivate a latently infected cell by penetrating in it and transactivating its LTR promoter. In the cytoplasm, Tat is thought to act as a translational activator of HIV-1 mRNAs. In terms of biological role, extracellular circulating Tat can be endocytosed by surrounding uninfected cells via the binding to several surface receptors such as CD26, CXCR4, heparan sulfate proteoglycans (HSPG) or LDLR. Neurons are rarely infected, but they internalize Tat via their LDLR. Through its interaction with nuclear HATs, Tat is potentially able to control the acetylation-dependent cellular gene expression. Modulates the expression of many cellular genes involved in cell survival, proliferation or in coding for cytokines or cytokine receptors. Tat plays a role in T-cell and neurons apoptosis. Tat induced neurotoxicity and apoptosis probably contribute to neuroAIDS. Circulating Tat also acts as a chemokine-like and/or growth factor-like molecule that binds to specific receptors on the surface of the cells, affecting many cellular pathways. In the vascular system, Tat binds to ITGAV/ITGB3 and ITGA5/ITGB1 integrins dimers at the surface of endothelial cells and competes with bFGF for heparin-binding sites, leading to an excess of soluble bFGF. The chain is Protein Tat from Homo sapiens (Human).